Consider the following 335-residue polypeptide: COP9 signalosome complex subunit 5 (335 aa).

One can recognise an MPN domain in the interval 51–187; it reads VRISAVALLK…IGAFRTFPKD (137 aa). Zn(2+) is bound by residues histidine 134, histidine 136, and aspartate 147. Residues 134–147 carry the JAMM motif motif; sequence HSHPGYGCWLSGID.

Belongs to the peptidase M67A family. CSN5 subfamily. As to quaternary structure, component of the COP9 signalosome (CSN) complex.

It is found in the cytoplasm. It localises to the nucleus. Its function is as follows. Catalytic component of the COP9 signalosome (CSN) complex that acts as an regulator of the ubiquitin (Ubl) conjugation pathway by mediating the deneddylation of the cullin subunit of SCF-type E3 ubiquitin-protein ligase complexes. The CSN complex seems to link protein degradation to sexual development. Required for fruit body formation. The protein is COP9 signalosome complex subunit 5 (rri1) of Emericella nidulans (strain FGSC A4 / ATCC 38163 / CBS 112.46 / NRRL 194 / M139) (Aspergillus nidulans).